The primary structure comprises 499 residues: Glycerol kinase (499 aa).

Thr13 provides a ligand contact to ADP. ATP is bound by residues Thr13, Thr14, and Ser15. Thr13 lines the sn-glycerol 3-phosphate pocket. Arg17 lines the ADP pocket. Sn-glycerol 3-phosphate is bound by residues Arg83, Glu84, Tyr135, and Asp245. Glycerol is bound by residues Arg83, Glu84, Tyr135, Asp245, and Gln246. ADP contacts are provided by Thr267 and Gly310. Positions 267, 310, 314, and 411 each coordinate ATP. ADP-binding residues include Ala411 and Asn415.

The protein belongs to the FGGY kinase family.

The enzyme catalyses glycerol + ATP = sn-glycerol 3-phosphate + ADP + H(+). It functions in the pathway polyol metabolism; glycerol degradation via glycerol kinase pathway; sn-glycerol 3-phosphate from glycerol: step 1/1. Inhibited by fructose 1,6-bisphosphate (FBP). Functionally, key enzyme in the regulation of glycerol uptake and metabolism. Catalyzes the phosphorylation of glycerol to yield sn-glycerol 3-phosphate. The chain is Glycerol kinase from Xylella fastidiosa (strain M23).